Consider the following 476-residue polypeptide: MPPHRSRRRKRASATQLYQTCKASGTCPPDVIPKIEGRTWADQILKWGSTGVFFGGLGIGTGAGSGGRTGYVPIGTRPPVVAEPGPAIRPPVVVDTIGPTDPSVISLLEESAVIDSSIPVPTDTSHGGFNITSSASGPSSTPAVLDISPPTNTIRVASTTSHNPVYSDPFTLRPSLPVEGNGRLLTSHPTIAPHSYEEIPMDTFVVSTDTSNTVTSTPIPGPRPTMRLGLYTRVTQQRPVATTTFLTSPERLVTYDNPAYEGPAEGTLEFEHPTIHEAPDSDFMDIIALHRPVLSARQGTVRVSRIGQRASLQTRSGARIGSRVHFFHDISPITRPSEAIELQPLGSSSTAVSTTASSAINDGLFDVYVDPDIPPSHALPPLRSPTHVSTVSLTSLGSVPAQTANTTVPLSLPTNINVGPDLSPPESPPFISTRPVSPSFDSVMVLGWDFILHPSYMWRKRRKPVPYFFADVRVAA.

A Nuclear localization signal motif is present at residues 1 to 12 (MPPHRSRRRKRA). Cys21 and Cys27 are disulfide-bonded. The Nuclear localization signal signature appears at 458–465 (WRKRRKPV).

It belongs to the papillomaviridae L2 protein family. As to quaternary structure, interacts with major capsid protein L1. Interacts with E2; this interaction inhibits E2 transcriptional activity but not the DNA replication function E2. Interacts with host GADD45GIP1. Interacts with host HSPA8; this interaction is required for L2 nuclear translocation. Interacts with host importins KPNB2 and KPNB3. Forms a complex with importin alpha2-beta1 heterodimers via interaction with the importin alpha2 adapter. Interacts with host DYNLT1; this interaction is essential for virus intracellular transport during entry. Interacts (via C-terminus) with host retromer subunits VPS35 and VPS29. Highly phosphorylated.

It localises to the virion. The protein resides in the host nucleus. It is found in the host early endosome. Its subcellular location is the host Golgi apparatus. Functionally, minor protein of the capsid that localizes along the inner surface of the virion, within the central cavities beneath the L1 pentamers. Plays a role in capsid stabilization through interaction with the major capsid protein L1. Once the virion enters the host cell, L2 escorts the genomic DNA into the nucleus by promoting escape from the endosomal compartments and traffic through the host Golgi network. Mechanistically, the C-terminus of L2 possesses a cell-penetrating peptide that protudes from the host endosome, interacts with host cytoplasmic retromer cargo and thereby mediates the capsid delivery to the host trans-Golgi network. Plays a role through its interaction with host dynein in the intracellular microtubule-dependent transport of viral capsid toward the nucleus. Mediates the viral genome import into the nucleus through binding to host importins. Once within the nucleus, L2 localizes viral genomes to host PML bodies in order to activate early gene expression for establishment of infection. Later on, promotes late gene expression by interacting with the viral E2 protein and by inhibiting its transcriptional activation functions. During virion assembly, encapsidates the genome by direct interaction with the viral DNA. This chain is Minor capsid protein L2, found in Human papillomavirus type 32.